The primary structure comprises 287 residues: 4-hydroxybenzoate octaprenyltransferase (287 aa).

The next 9 membrane-spanning stretches (helical) occupy residues P19–G39, L43–I63, V94–F114, L118–I138, V142–I162, W167–V187, V209–L229, Y235–S255, and F263–G283.

The protein belongs to the UbiA prenyltransferase family. It depends on Mg(2+) as a cofactor.

It localises to the cell inner membrane. It catalyses the reaction all-trans-octaprenyl diphosphate + 4-hydroxybenzoate = 4-hydroxy-3-(all-trans-octaprenyl)benzoate + diphosphate. It functions in the pathway cofactor biosynthesis; ubiquinone biosynthesis. Catalyzes the prenylation of para-hydroxybenzoate (PHB) with an all-trans polyprenyl group. Mediates the second step in the final reaction sequence of ubiquinone-8 (UQ-8) biosynthesis, which is the condensation of the polyisoprenoid side chain with PHB, generating the first membrane-bound Q intermediate 3-octaprenyl-4-hydroxybenzoate. In Polynucleobacter asymbioticus (strain DSM 18221 / CIP 109841 / QLW-P1DMWA-1) (Polynucleobacter necessarius subsp. asymbioticus), this protein is 4-hydroxybenzoate octaprenyltransferase.